The primary structure comprises 294 residues: Cytidine deaminase (294 aa).

CMP/dCMP-type deaminase domains follow at residues 48–168 and 187–294; these read DDNT…FGPN and ETTD…YYTF. Position 89 to 91 (89 to 91) interacts with substrate; it reads NME. His102 contributes to the Zn(2+) binding site. The active-site Proton donor is Glu104. The Zn(2+) site is built by Cys129 and Cys132.

Belongs to the cytidine and deoxycytidylate deaminase family. As to quaternary structure, homodimer. The cofactor is Zn(2+).

It carries out the reaction cytidine + H2O + H(+) = uridine + NH4(+). The catalysed reaction is 2'-deoxycytidine + H2O + H(+) = 2'-deoxyuridine + NH4(+). Its function is as follows. This enzyme scavenges exogenous and endogenous cytidine and 2'-deoxycytidine for UMP synthesis. In Photorhabdus laumondii subsp. laumondii (strain DSM 15139 / CIP 105565 / TT01) (Photorhabdus luminescens subsp. laumondii), this protein is Cytidine deaminase.